A 141-amino-acid polypeptide reads, in one-letter code: Alpha-lactalbumin (141 aa).

The first 19 residues, 1-19, serve as a signal peptide directing secretion; that stretch reads MMSFVSLLVVGILFPAIQA. The region spanning 20 to 141 is the C-type lysozyme domain; sequence KQFTKCELSQ…KLDQWLCEKM (122 aa). 4 disulfides stabilise this stretch: Cys-25–Cys-138, Cys-47–Cys-129, Cys-80–Cys-95, and Cys-91–Cys-109. The Ca(2+) site is built by Lys-97, Asp-100, Asp-102, Asp-105, and Asp-106.

It belongs to the glycosyl hydrolase 22 family. Lactose synthase (LS) is a heterodimer of a catalytic component, beta1,4-galactosyltransferase (beta4Gal-T1) and a regulatory component, alpha-lactalbumin (LA). Mammary gland specific. Secreted in milk.

The protein resides in the secreted. Its function is as follows. Regulatory subunit of lactose synthase, changes the substrate specificity of galactosyltransferase in the mammary gland making glucose a good acceptor substrate for this enzyme. This enables LS to synthesize lactose, the major carbohydrate component of milk. In other tissues, galactosyltransferase transfers galactose onto the N-acetylglucosamine of the oligosaccharide chains in glycoproteins. In Sus scrofa (Pig), this protein is Alpha-lactalbumin (LALBA).